The primary structure comprises 98 residues: Co-chaperonin GroES (98 aa).

It belongs to the GroES chaperonin family. Heptamer of 7 subunits arranged in a ring. Interacts with the chaperonin GroEL.

It is found in the cytoplasm. Functionally, together with the chaperonin GroEL, plays an essential role in assisting protein folding. The GroEL-GroES system forms a nano-cage that allows encapsulation of the non-native substrate proteins and provides a physical environment optimized to promote and accelerate protein folding. GroES binds to the apical surface of the GroEL ring, thereby capping the opening of the GroEL channel. The chain is Co-chaperonin GroES from Leifsonia xyli subsp. xyli (strain CTCB07).